The following is a 174-amino-acid chain: Gamma-crystallin A (174 aa).

Beta/gamma crystallin 'Greek key' domains lie at 2-40 and 41-83; these read GKIT…RVDS and GCWM…RSIP. The interval 84–87 is connecting peptide; sequence YTSS. Beta/gamma crystallin 'Greek key' domains are found at residues 88 to 128 and 129 to 171; these read HRIR…HVLE and GSWV…RRVM.

This sequence belongs to the beta/gamma-crystallin family.

Crystallins are the dominant structural components of the vertebrate eye lens. The sequence is that of Gamma-crystallin A (Cryga) from Rattus norvegicus (Rat).